The following is a 368-amino-acid chain: Protein mab-21-like (368 aa).

This sequence belongs to the mab-21 family.

The protein is Protein mab-21-like of Drosophila melanogaster (Fruit fly).